Reading from the N-terminus, the 404-residue chain is Probable tRNA sulfurtransferase (404 aa).

One can recognise a THUMP domain in the interval 60-165 (QPIVEALKLV…DEAAYISYEE (106 aa)). ATP-binding positions include 183 to 184 (ML), 208 to 209 (HF), Arg-265, Gly-287, and Gln-296.

It belongs to the ThiI family.

The protein localises to the cytoplasm. The catalysed reaction is [ThiI sulfur-carrier protein]-S-sulfanyl-L-cysteine + a uridine in tRNA + 2 reduced [2Fe-2S]-[ferredoxin] + ATP + H(+) = [ThiI sulfur-carrier protein]-L-cysteine + a 4-thiouridine in tRNA + 2 oxidized [2Fe-2S]-[ferredoxin] + AMP + diphosphate. The enzyme catalyses [ThiS sulfur-carrier protein]-C-terminal Gly-Gly-AMP + S-sulfanyl-L-cysteinyl-[cysteine desulfurase] + AH2 = [ThiS sulfur-carrier protein]-C-terminal-Gly-aminoethanethioate + L-cysteinyl-[cysteine desulfurase] + A + AMP + 2 H(+). The protein operates within cofactor biosynthesis; thiamine diphosphate biosynthesis. Functionally, catalyzes the ATP-dependent transfer of a sulfur to tRNA to produce 4-thiouridine in position 8 of tRNAs, which functions as a near-UV photosensor. Also catalyzes the transfer of sulfur to the sulfur carrier protein ThiS, forming ThiS-thiocarboxylate. This is a step in the synthesis of thiazole, in the thiamine biosynthesis pathway. The sulfur is donated as persulfide by IscS. The protein is Probable tRNA sulfurtransferase of Streptococcus pyogenes serotype M4 (strain MGAS10750).